A 37-amino-acid chain; its full sequence is Cytochrome b6-f complex subunit 5 (37 aa).

The helical transmembrane segment at 5 to 25 threads the bilayer; it reads LLCGIVLGLIPITLMGLFVAA.

This sequence belongs to the PetG family. The 4 large subunits of the cytochrome b6-f complex are cytochrome b6, subunit IV (17 kDa polypeptide, PetD), cytochrome f and the Rieske protein, while the 4 small subunits are PetG, PetL, PetM and PetN. The complex functions as a dimer.

The protein resides in the cellular thylakoid membrane. Its function is as follows. Component of the cytochrome b6-f complex, which mediates electron transfer between photosystem II (PSII) and photosystem I (PSI), cyclic electron flow around PSI, and state transitions. PetG is required for either the stability or assembly of the cytochrome b6-f complex. This is Cytochrome b6-f complex subunit 5 from Synechococcus sp. (strain CC9311).